The sequence spans 759 residues: Phosphoribosylformylglycinamidine synthase subunit PurL (759 aa).

The active site involves His46. Residues Tyr49 and Lys88 each coordinate ATP. Glu90 lines the Mg(2+) pocket. Substrate is bound by residues 91-94 (SHNH) and Arg113. His92 functions as the Proton acceptor in the catalytic mechanism. Residue Asp114 participates in Mg(2+) binding. Position 237 (Gln237) interacts with substrate. Residue Asp265 coordinates Mg(2+). 309–311 (ESQ) lines the substrate pocket. Residues Asp498 and Gly535 each coordinate ATP. Mg(2+) is bound at residue Asn536. Ser538 serves as a coordination point for substrate.

This sequence belongs to the FGAMS family. As to quaternary structure, monomer. Part of the FGAM synthase complex composed of 1 PurL, 1 PurQ and 2 PurS subunits.

The protein localises to the cytoplasm. It carries out the reaction N(2)-formyl-N(1)-(5-phospho-beta-D-ribosyl)glycinamide + L-glutamine + ATP + H2O = 2-formamido-N(1)-(5-O-phospho-beta-D-ribosyl)acetamidine + L-glutamate + ADP + phosphate + H(+). It participates in purine metabolism; IMP biosynthesis via de novo pathway; 5-amino-1-(5-phospho-D-ribosyl)imidazole from N(2)-formyl-N(1)-(5-phospho-D-ribosyl)glycinamide: step 1/2. Its function is as follows. Part of the phosphoribosylformylglycinamidine synthase complex involved in the purines biosynthetic pathway. Catalyzes the ATP-dependent conversion of formylglycinamide ribonucleotide (FGAR) and glutamine to yield formylglycinamidine ribonucleotide (FGAM) and glutamate. The FGAM synthase complex is composed of three subunits. PurQ produces an ammonia molecule by converting glutamine to glutamate. PurL transfers the ammonia molecule to FGAR to form FGAM in an ATP-dependent manner. PurS interacts with PurQ and PurL and is thought to assist in the transfer of the ammonia molecule from PurQ to PurL. This Anaeromyxobacter dehalogenans (strain 2CP-1 / ATCC BAA-258) protein is Phosphoribosylformylglycinamidine synthase subunit PurL.